The primary structure comprises 182 residues: Lipoprotein signal peptidase (182 aa).

3 helical membrane-spanning segments follow: residues 12-32 (VAVF…TKAW), 68-88 (ATWV…VAGV), and 91-111 (ISMK…GNLI). Active-site residues include aspartate 127 and aspartate 140. Residues 135–155 (VGNVADIYLVVAGVVLVILIL) form a helical membrane-spanning segment.

This sequence belongs to the peptidase A8 family.

The protein localises to the cell membrane. The catalysed reaction is Release of signal peptides from bacterial membrane prolipoproteins. Hydrolyzes -Xaa-Yaa-Zaa-|-(S,diacylglyceryl)Cys-, in which Xaa is hydrophobic (preferably Leu), and Yaa (Ala or Ser) and Zaa (Gly or Ala) have small, neutral side chains.. It functions in the pathway protein modification; lipoprotein biosynthesis (signal peptide cleavage). Its function is as follows. This protein specifically catalyzes the removal of signal peptides from prolipoproteins. This is Lipoprotein signal peptidase from Bifidobacterium longum subsp. infantis (strain ATCC 15697 / DSM 20088 / JCM 1222 / NCTC 11817 / S12).